The primary structure comprises 190 residues: Lipid A acyltransferase PagP (190 aa).

The first 18 residues, 1 to 18 (MKRLISCLTIICALNASA), serve as a signal peptide directing secretion. Residues histidine 60, aspartate 103, and serine 104 contribute to the active site.

Belongs to the lipid A palmitoyltransferase family. Homodimer.

It is found in the cell outer membrane. It catalyses the reaction a lipid A + a 1,2-diacyl-sn-glycero-3-phosphocholine = a hepta-acyl lipid A + a 2-acyl-sn-glycero-3-phosphocholine. It carries out the reaction a lipid IVA + a 1,2-diacyl-sn-glycero-3-phosphocholine = a lipid IVB + a 2-acyl-sn-glycero-3-phosphocholine. The enzyme catalyses a lipid IIA + a 1,2-diacyl-sn-glycero-3-phosphocholine = a lipid IIB + a 2-acyl-sn-glycero-3-phosphocholine. Its function is as follows. Transfers a fatty acid residue from the sn-1 position of a phospholipid to the N-linked hydroxyfatty acid chain on the proximal unit of lipid A or its precursors. The protein is Lipid A acyltransferase PagP of Legionella pneumophila (strain Corby).